A 124-amino-acid chain; its full sequence is Small ribosomal subunit protein uS12c (124 aa).

2 disordered regions span residues 1–28 and 104–124; these read MPTIQQLVRSERRKIHKKTKSPALQSCP and AAGVKDRRKSRSKYGTKKPKS. 2 stretches are compositionally biased toward basic residues: residues 11 to 20 and 109 to 124; these read ERRKIHKKTK and DRRKSRSKYGTKKPKS.

The protein belongs to the universal ribosomal protein uS12 family. Part of the 30S ribosomal subunit.

Its subcellular location is the plastid. The protein localises to the chloroplast. Functionally, with S4 and S5 plays an important role in translational accuracy. Located at the interface of the 30S and 50S subunits. The protein is Small ribosomal subunit protein uS12c (rps12) of Pyropia yezoensis (Susabi-nori).